The sequence spans 120 residues: Large ribosomal subunit protein uL18 (120 aa).

The protein belongs to the universal ribosomal protein uL18 family. As to quaternary structure, part of the 50S ribosomal subunit; part of the 5S rRNA/L5/L18/L25 subcomplex. Contacts the 5S and 23S rRNAs.

This is one of the proteins that bind and probably mediate the attachment of the 5S RNA into the large ribosomal subunit, where it forms part of the central protuberance. This Bordetella bronchiseptica (strain ATCC BAA-588 / NCTC 13252 / RB50) (Alcaligenes bronchisepticus) protein is Large ribosomal subunit protein uL18.